The sequence spans 435 residues: Cytochrome c oxidase subunit 3 (435 aa).

7 helical membrane passes run V70–I90, L96–F116, L132–W152, V176–I196, L325–F345, F360–I380, and L412–W432.

The protein belongs to the cytochrome c oxidase subunit 3 family. In terms of assembly, component of the cytochrome c oxidase (complex IV, CIV), a multisubunit enzyme composed of a catalytic core of 3 subunits and several supernumerary subunits. The complex exists as a monomer or a dimer and forms supercomplexes (SCs) in the inner mitochondrial membrane with ubiquinol-cytochrome c oxidoreductase (cytochrome b-c1 complex, complex III, CIII).

It localises to the mitochondrion inner membrane. It catalyses the reaction 4 Fe(II)-[cytochrome c] + O2 + 8 H(+)(in) = 4 Fe(III)-[cytochrome c] + 2 H2O + 4 H(+)(out). Component of the cytochrome c oxidase, the last enzyme in the mitochondrial electron transport chain which drives oxidative phosphorylation. The respiratory chain contains 3 multisubunit complexes succinate dehydrogenase (complex II, CII), ubiquinol-cytochrome c oxidoreductase (cytochrome b-c1 complex, complex III, CIII) and cytochrome c oxidase (complex IV, CIV), that cooperate to transfer electrons derived from NADH and succinate to molecular oxygen, creating an electrochemical gradient over the inner membrane that drives transmembrane transport and the ATP synthase. Cytochrome c oxidase is the component of the respiratory chain that catalyzes the reduction of oxygen to water. Electrons originating from reduced cytochrome c in the intermembrane space (IMS) are transferred via the dinuclear copper A center (CU(A)) of subunit 2 and heme A of subunit 1 to the active site in subunit 1, a binuclear center (BNC) formed by heme A3 and copper B (CU(B)). The BNC reduces molecular oxygen to 2 water molecules using 4 electrons from cytochrome c in the IMS and 4 protons from the mitochondrial matrix. This Dictyostelium discoideum (Social amoeba) protein is Cytochrome c oxidase subunit 3 (cox3).